The chain runs to 620 residues: 1-deoxy-D-xylulose-5-phosphate synthase (620 aa).

Thiamine diphosphate contacts are provided by residues H80 and 121-123; that span reads GHS. Mg(2+) is bound at residue D152. Thiamine diphosphate-binding positions include 153–154, N181, Y288, and E370; that span reads GA. Residue N181 coordinates Mg(2+).

The protein belongs to the transketolase family. DXPS subfamily. Homodimer. Mg(2+) serves as cofactor. Thiamine diphosphate is required as a cofactor.

The enzyme catalyses D-glyceraldehyde 3-phosphate + pyruvate + H(+) = 1-deoxy-D-xylulose 5-phosphate + CO2. The protein operates within metabolic intermediate biosynthesis; 1-deoxy-D-xylulose 5-phosphate biosynthesis; 1-deoxy-D-xylulose 5-phosphate from D-glyceraldehyde 3-phosphate and pyruvate: step 1/1. Its function is as follows. Catalyzes the acyloin condensation reaction between C atoms 2 and 3 of pyruvate and glyceraldehyde 3-phosphate to yield 1-deoxy-D-xylulose-5-phosphate (DXP). In Sodalis glossinidius (strain morsitans), this protein is 1-deoxy-D-xylulose-5-phosphate synthase.